The sequence spans 405 residues: Tryptophan synthase beta chain (405 aa).

K95 is modified (N6-(pyridoxal phosphate)lysine).

Belongs to the TrpB family. Tetramer of two alpha and two beta chains. Pyridoxal 5'-phosphate is required as a cofactor.

The catalysed reaction is (1S,2R)-1-C-(indol-3-yl)glycerol 3-phosphate + L-serine = D-glyceraldehyde 3-phosphate + L-tryptophan + H2O. It functions in the pathway amino-acid biosynthesis; L-tryptophan biosynthesis; L-tryptophan from chorismate: step 5/5. In terms of biological role, the beta subunit is responsible for the synthesis of L-tryptophan from indole and L-serine. The protein is Tryptophan synthase beta chain of Pseudomonas entomophila (strain L48).